The following is a 244-amino-acid chain: Pyridoxine 5'-phosphate synthase (244 aa).

Asn9 contributes to the 3-amino-2-oxopropyl phosphate binding site. 11–12 (DH) provides a ligand contact to 1-deoxy-D-xylulose 5-phosphate. Residue Arg20 participates in 3-amino-2-oxopropyl phosphate binding. Catalysis depends on His45, which acts as the Proton acceptor. 1-deoxy-D-xylulose 5-phosphate contacts are provided by Arg47 and His52. Glu72 serves as the catalytic Proton acceptor. Residue Thr102 coordinates 1-deoxy-D-xylulose 5-phosphate. His193 acts as the Proton donor in catalysis. Residues Gly194 and 215 to 216 (GH) each bind 3-amino-2-oxopropyl phosphate.

This sequence belongs to the PNP synthase family. As to quaternary structure, homooctamer; tetramer of dimers.

The protein localises to the cytoplasm. The catalysed reaction is 3-amino-2-oxopropyl phosphate + 1-deoxy-D-xylulose 5-phosphate = pyridoxine 5'-phosphate + phosphate + 2 H2O + H(+). The protein operates within cofactor biosynthesis; pyridoxine 5'-phosphate biosynthesis; pyridoxine 5'-phosphate from D-erythrose 4-phosphate: step 5/5. Its function is as follows. Catalyzes the complicated ring closure reaction between the two acyclic compounds 1-deoxy-D-xylulose-5-phosphate (DXP) and 3-amino-2-oxopropyl phosphate (1-amino-acetone-3-phosphate or AAP) to form pyridoxine 5'-phosphate (PNP) and inorganic phosphate. This is Pyridoxine 5'-phosphate synthase from Blochmanniella pennsylvanica (strain BPEN).